A 289-amino-acid polypeptide reads, in one-letter code: 33 kDa chaperonin (289 aa).

Cystine bridges form between Cys-235-Cys-237 and Cys-268-Cys-271.

The protein belongs to the HSP33 family. Under oxidizing conditions two disulfide bonds are formed involving the reactive cysteines. Under reducing conditions zinc is bound to the reactive cysteines and the protein is inactive.

The protein resides in the cytoplasm. Functionally, redox regulated molecular chaperone. Protects both thermally unfolding and oxidatively damaged proteins from irreversible aggregation. Plays an important role in the bacterial defense system toward oxidative stress. The sequence is that of 33 kDa chaperonin from Bacillus licheniformis (strain ATCC 14580 / DSM 13 / JCM 2505 / CCUG 7422 / NBRC 12200 / NCIMB 9375 / NCTC 10341 / NRRL NRS-1264 / Gibson 46).